The chain runs to 509 residues: ATP synthase subunit alpha 1 (509 aa).

Position 172-179 (172-179 (GDRQTGKT)) interacts with ATP.

This sequence belongs to the ATPase alpha/beta chains family. In terms of assembly, F-type ATPases have 2 components, CF(1) - the catalytic core - and CF(0) - the membrane proton channel. CF(1) has five subunits: alpha(3), beta(3), gamma(1), delta(1), epsilon(1). CF(0) has four main subunits: a(1), b(1), b'(1) and c(9-12).

Its subcellular location is the cell inner membrane. The catalysed reaction is ATP + H2O + 4 H(+)(in) = ADP + phosphate + 5 H(+)(out). In terms of biological role, produces ATP from ADP in the presence of a proton gradient across the membrane. The alpha chain is a regulatory subunit. In Dinoroseobacter shibae (strain DSM 16493 / NCIMB 14021 / DFL 12), this protein is ATP synthase subunit alpha 1.